The following is a 234-amino-acid chain: Thiamine-phosphate synthase (234 aa).

Residues 52-56 (QYRSK) and asparagine 84 each bind 4-amino-2-methyl-5-(diphosphooxymethyl)pyrimidine. Mg(2+) is bound by residues aspartate 85 and aspartate 104. A 4-amino-2-methyl-5-(diphosphooxymethyl)pyrimidine-binding site is contributed by serine 123. Position 150–152 (150–152 (SVT)) interacts with 2-[(2R,5Z)-2-carboxy-4-methylthiazol-5(2H)-ylidene]ethyl phosphate. Residue lysine 153 coordinates 4-amino-2-methyl-5-(diphosphooxymethyl)pyrimidine. Glycine 180 is a 2-[(2R,5Z)-2-carboxy-4-methylthiazol-5(2H)-ylidene]ethyl phosphate binding site.

Belongs to the thiamine-phosphate synthase family. Mg(2+) is required as a cofactor.

It catalyses the reaction 2-[(2R,5Z)-2-carboxy-4-methylthiazol-5(2H)-ylidene]ethyl phosphate + 4-amino-2-methyl-5-(diphosphooxymethyl)pyrimidine + 2 H(+) = thiamine phosphate + CO2 + diphosphate. The catalysed reaction is 2-(2-carboxy-4-methylthiazol-5-yl)ethyl phosphate + 4-amino-2-methyl-5-(diphosphooxymethyl)pyrimidine + 2 H(+) = thiamine phosphate + CO2 + diphosphate. It carries out the reaction 4-methyl-5-(2-phosphooxyethyl)-thiazole + 4-amino-2-methyl-5-(diphosphooxymethyl)pyrimidine + H(+) = thiamine phosphate + diphosphate. Its pathway is cofactor biosynthesis; thiamine diphosphate biosynthesis; thiamine phosphate from 4-amino-2-methyl-5-diphosphomethylpyrimidine and 4-methyl-5-(2-phosphoethyl)-thiazole: step 1/1. Condenses 4-methyl-5-(beta-hydroxyethyl)thiazole monophosphate (THZ-P) and 2-methyl-4-amino-5-hydroxymethyl pyrimidine pyrophosphate (HMP-PP) to form thiamine monophosphate (TMP). This Nitrosospira multiformis (strain ATCC 25196 / NCIMB 11849 / C 71) protein is Thiamine-phosphate synthase.